A 2223-amino-acid chain; its full sequence is Protein CHROMATIN REMODELING 4 (2223 aa).

The interval 39–69 (FDSPEYTSSSKPSKQRLKTDSTPERNSSKRK) is disordered. Residues 55–69 (LKTDSTPERNSSKRK) are compositionally biased toward basic and acidic residues. The PHD-type zinc finger occupies 75–122 (YFECVICDLGGDLLCCDSCPRTYHTACLNPPLKRIPNGKWICPKCSPN). 4 stretches are compositionally biased toward basic and acidic residues: residues 173–187 (EKGK…KSTG), 207–223 (SADD…DDLG), 248–285 (ESKL…ETGK), and 294–305 (ELNDGESLERCK). 3 disordered regions span residues 173-235 (EKGK…LPSD), 248-381 (ESKL…CLED), and 441-474 (AEDR…GTEG). Basic residues predominate over residues 306–315 (TDKKRAKKSL). Over residues 353 to 368 (ETPEKVKKLPKEERRA) the composition is skewed to basic and acidic residues. A compositionally biased stretch (polar residues) spans 372 to 381 (TNKSSSCLED). The segment covering 441 to 466 (AEDRIDSSSETGKSSRDSRLRDKDMD) has biased composition (basic and acidic residues). 2 consecutive Chromo domains span residues 531–587 (EEIE…YKAK) and 601–663 (KQPQ…ERNS). Residues 701–878 (RRCWHKSKNV…YNLLNFLQPS (178 aa)) form the Helicase ATP-binding domain. ATP is bound at residue 714–721 (DEMGLGKT). A DEAH box motif is present at residues 829 to 832 (DEGH). The Nuclear localization signal signature appears at 902–909 (LKKLVAPH). In terms of domain architecture, Helicase C-terminal spans 1008 to 1167 (LLHSMLKVLH…GSQKEFEDIL (160 aa)). Disordered regions lie at residues 1268–1300 (EETA…DDVV), 1341–1380 (EAYA…LKEK), 1394–1463 (RRNS…ECLP), 1483–1511 (SESS…FNLP), 1760–1779 (LSSL…SSLF), and 2006–2223 (IPPF…LSDD). Positions 1363-1380 (EPELKKEYTPAGRALKEK) are enriched in basic and acidic residues. Residues 1375 to 1402 (RALKEKFTKLRERQKNLIARRNSVEESL) are a coiled coil. The segment covering 1403-1414 (PSGNVDQVTEVA) has biased composition (polar residues). Pro residues predominate over residues 2009–2019 (FVIPEPPPPAP). The segment covering 2025 to 2035 (SLRKKRKRKLH) has biased composition (basic residues). Polar residues-rich tracts occupy residues 2039 to 2061 (QKTT…GNPQ), 2075 to 2096 (GETS…TEPL), and 2128 to 2148 (TGTT…TINQ). Residues 2157-2171 (DEKVESERTPLHSDE) show a composition bias toward basic and acidic residues. The stretch at 2189–2215 (IEAESQNTNAEEEAEAQEEDEESMKMV) forms a coiled coil. The segment covering 2198–2210 (AEEEAEAQEEDEE) has biased composition (acidic residues).

Belongs to the SNF2/RAD54 helicase family.

The protein resides in the nucleus. Chromatin-remodeling protein that binds DNA through histones and regulates gene transcription. May specifically recognize and bind trimethylated 'Lys-27' (H3K27me3) and non-methylated 'Lys-4' of histone H3. Probable chromatin remodeling factor. This is Protein CHROMATIN REMODELING 4 from Arabidopsis thaliana (Mouse-ear cress).